Here is a 69-residue protein sequence, read N- to C-terminus: KDKENCIGKHHECTDDRDSCCKGKLFRYQCQCFKVIDGKKETKRCACVTPLHYKMAEMAVSVFKKMFKN.

Intrachain disulfides connect Cys-6–Cys-21, Cys-13–Cys-30, Cys-20–Cys-47, and Cys-32–Cys-45.

In terms of tissue distribution, expressed by the venom gland.

Its subcellular location is the secreted. The protein localises to the target cell membrane. Functionally, spider venom toxin that shows calcium channel blocking activity and exhibits cytolytic activity by affecting the outer leaflet curvature and/or pore formation across the membrane. It blocks L-type calcium channels (Cav1/CACNA1) in mammalian neurons at nanomolar concentrations. Furthermore, it produces a slow voltage-independent block of mid/low and high voltage-activated calcium channels in cockroach neurons. Potassium ions, histamine, M-ctenitoxin-Cs1a (AC P83619), CSTX-9 (AC P58604), and CSTX-13 (AC P83919) synergistically increase the insecticidal activity of this toxin. In vivo, it causes paralysis in blow flies and provokes death in drosophila. This is Toxin CSTX-11 from Cupiennius salei (American wandering spider).